Reading from the N-terminus, the 115-residue chain is Evasin P1181 (115 aa).

A signal peptide spans 1–25; sequence MALNWSFRVIFVSAMWCALLKFATL. Intrachain disulfides connect Cys-38-Cys-58, Cys-54-Cys-94, Cys-70-Cys-99, and Cys-89-Cys-108. Asn-45, Asn-72, and Asn-103 each carry an N-linked (GlcNAc...) asparagine glycan.

It localises to the secreted. Its function is as follows. Salivary chemokine-binding protein which binds to host chemokines CCL3 and CCL4. In Amblyomma maculatum (Gulf Coast tick), this protein is Evasin P1181.